The sequence spans 434 residues: Monodehydroascorbate reductase 1, peroxisomal (434 aa).

Residues 13–16 (GGVS), Glu-40, Arg-47, Lys-52, Ile-95, and 146–147 (RE) each bind FAD. Residues 171–177 (GGYIGLE), Glu-195, Arg-201, and Gly-260 each bind NAD(+). An NADP(+)-binding site is contributed by 173 to 177 (YIGLE). Arg-201 and Gly-260 together coordinate NADP(+). Asp-297 provides a ligand contact to FAD. 313 to 314 (EH) contributes to the NAD(+) binding site. 313–314 (EH) provides a ligand contact to NADP(+). Val-315 contributes to the FAD binding site. Residue Arg-319 participates in L-ascorbate binding. Tyr-348 contacts FAD. Tyr-348 is an NAD(+) binding site. Residue Tyr-348 participates in NADP(+) binding. Arg-350 contributes to the L-ascorbate binding site. Ser-416 carries the phosphoserine modification.

Belongs to the FAD-dependent oxidoreductase family. Requires FAD as cofactor.

The protein resides in the peroxisome matrix. It carries out the reaction 2 monodehydro-L-ascorbate radical + NADH + H(+) = 2 L-ascorbate + NAD(+). Catalyzes the conversion of monodehydroascorbate to ascorbate, oxidizing NADH in the process. The polypeptide is Monodehydroascorbate reductase 1, peroxisomal (Arabidopsis thaliana (Mouse-ear cress)).